The following is a 207-amino-acid chain: Mediator of RNA polymerase II transcription subunit 18 (207 aa).

This sequence belongs to the Mediator complex subunit 18 family. In terms of assembly, component of the Mediator complex. Interacts with med17, prk1 and rbp1.

The protein resides in the nucleus. Component of the Mediator complex, a coactivator involved in the regulated transcription of nearly all RNA polymerase II-dependent genes. Mediator functions as a bridge to convey information from gene-specific regulatory proteins to the basal RNA polymerase II transcription machinery. Mediator is recruited to promoters by direct interactions with regulatory proteins and serves as a scaffold for the assembly of a functional preinitiation complex with RNA polymerase II and the general transcription factors. This Schizosaccharomyces pombe (strain 972 / ATCC 24843) (Fission yeast) protein is Mediator of RNA polymerase II transcription subunit 18 (med18).